The following is a 94-amino-acid chain: Neutrophil defensin 1 (94 aa).

A signal peptide spans 1 to 19 (MRTLAILAAILLVALQAQA). Positions 20-64 (EPLQARADEVAAAPEQIPADNPEVVVSLAWDESLAPKHPGSRKNV) are excised as a propeptide. Cystine bridges form between Cys66–Cys94, Cys68–Cys83, and Cys73–Cys93. Arg78 is modified (ADP-ribosylarginine; by ART1). Residue Tyr85 is modified to Phosphotyrosine. At Arg88 the chain carries ADP-ribosylarginine; by ART1.

The protein belongs to the alpha-defensin family. In terms of assembly, tetramer. Dimer. Interacts with RETN. Post-translationally, ADP-ribosylation drastically reduces cytotoxic and antibacterial activities, and enhances IL8 production.

It localises to the secreted. In terms of biological role, effector molecule of the innate immune system that acts via antibiotic-like properties against a broad array of infectious agents including bacteria, fungi, and viruses or by promoting the activation and maturation of some APCs. Interacts with the essential precursor of cell wall synthesis lipid II to inhibit bacterial cell wall synthesis. Inhibits adenovirus infection via inhibition of viral disassembly at the vertex region, thereby restricting the release of internal capsid protein pVI, which is required for endosomal membrane penetration during cell entry. In addition, interaction with adenovirus capsid leads to the redirection of viral particles to TLR4 thereby promoting a NLRP3-mediated inflammasome response and interleukin 1-beta (IL-1beta) release. Induces the production of proinflammatory cytokines including type I interferon (IFN) in plasmacytoid dendritic cells (pDCs) by triggering the degradation of NFKBIA and nuclear translocation of IRF1, both of which are required for activation of pDCs. The protein is Neutrophil defensin 1 (DEFA1) of Pan troglodytes (Chimpanzee).